A 216-amino-acid polypeptide reads, in one-letter code: Small ribosomal subunit protein uS4 (216 aa).

Residues 111–175 (RRLQTQVLRL…SPLVSESHPE (65 aa)) form the S4 RNA-binding domain. The disordered stretch occupies residues 194–216 (VAEAKQAKEKPPERGGRKRRGRR). Residues 198-208 (KQAKEKPPERG) are compositionally biased toward basic and acidic residues.

Belongs to the universal ribosomal protein uS4 family. In terms of assembly, part of the 30S ribosomal subunit. Contacts protein S5. The interaction surface between S4 and S5 is involved in control of translational fidelity.

In terms of biological role, one of the primary rRNA binding proteins, it binds directly to 16S rRNA where it nucleates assembly of the body of the 30S subunit. With S5 and S12 plays an important role in translational accuracy. The sequence is that of Small ribosomal subunit protein uS4 from Methanosarcina barkeri (strain Fusaro / DSM 804).